The primary structure comprises 400 residues: Na(+)/H(+) antiporter NhaA (400 aa).

Transmembrane regions (helical) follow at residues 26-46 (AGGILLLFSAVVAMLLANSPL), 71-91 (LIHWINDGFMAVFFVLVGMEV), 107-127 (IFPAIAAIGGMVIPAVVYWFI), 137-157 (GWAIPMATDIAFALGIMALLS), 166-186 (IFLLALAIIDDLGAIVVIALF), 189-209 (HGLSVQALIFSAVAIIALILL), 212-232 (FKVSALCAYMVVGAILWASVL), 233-253 (KSGVHATLAGVIIGFSIPLKG), 273-293 (FVILPLFAFANAGVSFAGIDV), 299-319 (PLLLAIASGLIIGKPVGIFGF), 340-360 (IFAVAVLCGIGFTMSMFLASL), and 373-393 (LSRLGILFGSTVSAILGYLFL).

The protein belongs to the NhaA Na(+)/H(+) (TC 2.A.33) antiporter family.

The protein resides in the cell inner membrane. It catalyses the reaction Na(+)(in) + 2 H(+)(out) = Na(+)(out) + 2 H(+)(in). In terms of biological role, na(+)/H(+) antiporter that extrudes sodium in exchange for external protons. The polypeptide is Na(+)/H(+) antiporter NhaA (Haemophilus influenzae (strain PittEE)).